The chain runs to 264 residues: Thymidylate synthase (264 aa).

Arg-21 is a binding site for dUMP. A (6R)-5,10-methylene-5,6,7,8-tetrahydrofolate-binding site is contributed by His-51. Arg-126–Arg-127 is a binding site for dUMP. Cys-146 serves as the catalytic Nucleophile. Residues Arg-166–Asp-169, Asn-177, and His-207–Tyr-209 each bind dUMP. Asp-169 serves as a coordination point for (6R)-5,10-methylene-5,6,7,8-tetrahydrofolate. (6R)-5,10-methylene-5,6,7,8-tetrahydrofolate is bound at residue Ala-263.

This sequence belongs to the thymidylate synthase family. Bacterial-type ThyA subfamily. Homodimer.

It is found in the cytoplasm. It catalyses the reaction dUMP + (6R)-5,10-methylene-5,6,7,8-tetrahydrofolate = 7,8-dihydrofolate + dTMP. The protein operates within pyrimidine metabolism; dTTP biosynthesis. Its function is as follows. Catalyzes the reductive methylation of 2'-deoxyuridine-5'-monophosphate (dUMP) to 2'-deoxythymidine-5'-monophosphate (dTMP) while utilizing 5,10-methylenetetrahydrofolate (mTHF) as the methyl donor and reductant in the reaction, yielding dihydrofolate (DHF) as a by-product. This enzymatic reaction provides an intracellular de novo source of dTMP, an essential precursor for DNA biosynthesis. This Enterobacter sp. (strain 638) protein is Thymidylate synthase.